A 457-amino-acid polypeptide reads, in one-letter code: ATP synthase subunit beta (457 aa).

Gly-147–Thr-154 provides a ligand contact to ATP.

Belongs to the ATPase alpha/beta chains family. F-type ATPases have 2 components, CF(1) - the catalytic core - and CF(0) - the membrane proton channel. CF(1) has five subunits: alpha(3), beta(3), gamma(1), delta(1), epsilon(1). CF(0) has three main subunits: a(1), b(2) and c(9-12). The alpha and beta chains form an alternating ring which encloses part of the gamma chain. CF(1) is attached to CF(0) by a central stalk formed by the gamma and epsilon chains, while a peripheral stalk is formed by the delta and b chains.

The protein resides in the cell inner membrane. The catalysed reaction is ATP + H2O + 4 H(+)(in) = ADP + phosphate + 5 H(+)(out). In terms of biological role, produces ATP from ADP in the presence of a proton gradient across the membrane. The catalytic sites are hosted primarily by the beta subunits. The chain is ATP synthase subunit beta from Histophilus somni (strain 129Pt) (Haemophilus somnus).